The sequence spans 651 residues: Cylicin-1 (651 aa).

2 disordered regions span residues 110 to 241 and 267 to 615; these read LKKA…CSEN and NYSQ…CEPS. Composition is skewed to basic and acidic residues over residues 111–129 and 146–173; these read KKAEYKKSKDEKGGTPLKK and QIVEEKTKRQNEADKTPLKSSHENEQSK. Polar residues predominate over residues 186-195; the sequence is QNSKTVSKNC. Basic and acidic residues predominate over residues 196-205; the sequence is SQKDKKDSKN. The span at 230 to 241 shows a compositional bias: polar residues; sequence SNDPISEICSEN. Low complexity predominate over residues 271 to 281; it reads NNSKNYSLKYT. 8 tandem repeats follow at residues 278–305, 306–342, 343–379, 380–417, 418–453, 454–491, 492–531, and 532–553. Composition is skewed to basic and acidic residues over residues 284 to 308, 318 to 331, 338 to 368, 375 to 402, 413 to 441, and 448 to 482; these read TKKDTKKNAKKSSDAESEDSKDAKK, KKDDKKKDVKKDTE, GDSKDERKDTKKDKKKLKKDDKKKDTKKYPE, GDAKDARNDSRNLKKASKNDDKKKDAKK, LESKESQKDEKKDKKDSKTDNKKSVKNDE, and SEPKGDSKKGKKDEKKGKKDSKKDDKKKDAKKNAE. Residues 495-505 are compositionally biased toward basic residues; sequence DKKHSKEKKGS. Over residues 506–518 the composition is skewed to basic and acidic residues; the sequence is KKDIKKDARKDTE. Over residues 529–538 the composition is skewed to polar residues; sequence KTGFKTSTKI. The tract at residues 532 to 553 is 8 X approximate tandem repeats; the sequence is FKTSTKIKGSDTESEESLYKPG. Positions 587–607 are enriched in basic and acidic residues; sequence TFNEKGEKASTGRVPPSREKP.

Interacts with proteins of spermatozoa head including ACTL7A, CCIN, FAM209A and SPACA1; the interactions may be necessary for proper acrosome attachment to the nuclear envelope. In terms of tissue distribution, testis.

It is found in the cytoplasm. The protein localises to the cytoskeleton. It localises to the perinuclear theca. The protein resides in the calyx. In terms of biological role, plays a role in the establishment of normal sperm morphology during spermatogenesis and is required for acrosome attachment to the nuclear envelope. The sequence is that of Cylicin-1 (CYLC1) from Homo sapiens (Human).